A 79-amino-acid polypeptide reads, in one-letter code: Cytochrome b (79 aa).

A run of 3 helical transmembrane segments spans residues 1–7 (TALLLAA), 31–52 (WLIR…YLHI), and 67–79 (WNIG…TLMA). His37 and His51 together coordinate heme b.

Belongs to the cytochrome b family. In terms of assembly, the cytochrome bc1 complex contains 11 subunits: 3 respiratory subunits (MT-CYB, CYC1 and UQCRFS1), 2 core proteins (UQCRC1 and UQCRC2) and 6 low-molecular weight proteins (UQCRH/QCR6, UQCRB/QCR7, UQCRQ/QCR8, UQCR10/QCR9, UQCR11/QCR10 and a cleavage product of UQCRFS1). This cytochrome bc1 complex then forms a dimer. The cofactor is heme b.

Its subcellular location is the mitochondrion inner membrane. Its function is as follows. Component of the ubiquinol-cytochrome c reductase complex (complex III or cytochrome b-c1 complex) that is part of the mitochondrial respiratory chain. The b-c1 complex mediates electron transfer from ubiquinol to cytochrome c. Contributes to the generation of a proton gradient across the mitochondrial membrane that is then used for ATP synthesis. The protein is Cytochrome b (MT-CYB) of Pomatostomus superciliosus (White-browed babbler).